Reading from the N-terminus, the 179-residue chain is MEKIIIDHDRFLRTISRISHEIIEKHQTLDDLVIVGIKRRGAEIAELLQRRVEELSGINLPSMELDITFYRDDLTLVDQEDKMPVYSGSSQYLNIQDKTVILVDDVLFTGRTIRAAMDALTDFGRAAKIELVIFVDRGHRELPIRADYVGKNVPTSRDELVQVRTEKQDGCYEVAILGK.

The PRPP-binding motif lies at 100 to 112 (VILVDDVLFTGRT).

The protein belongs to the purine/pyrimidine phosphoribosyltransferase family. PyrR subfamily.

The catalysed reaction is UMP + diphosphate = 5-phospho-alpha-D-ribose 1-diphosphate + uracil. Its function is as follows. Regulates the transcription of the pyrimidine nucleotide (pyr) operon in response to exogenous pyrimidines. Also displays a weak uracil phosphoribosyltransferase activity which is not physiologically significant. The chain is Bifunctional protein PyrR from Haemophilus influenzae (strain 86-028NP).